The primary structure comprises 548 residues: Sensor protein TdiS (548 aa).

The 70-residue stretch at 20 to 89 (DPATGYEVIF…IGENYGHFFE (70 aa)) folds into the PAS 1 domain. One can recognise a PAC 1 domain in the interval 94–145 (FKDERPIIRKDGSVIWCIVTGSLLDSSNPRLGSIWVVQDISEHKRTEDDLKA). Residues 185-256 (HREKYEKLFH…RKRLPWRIHD (72 aa)) enclose the PAS 2 domain. The region spanning 263-314 (KNIEIGMREEESRKQRWLSVSSSLLELKGQKMVVAAFTDITYRKRIEELERL) is the PAC 2 domain. In terms of domain architecture, Histidine kinase spans 334 to 548 (ALAHQMGQPL…GSKFQFTLPI (215 aa)). Position 337 is a phosphohistidine; by autocatalysis (H337).

Autophosphorylated.

It catalyses the reaction ATP + protein L-histidine = ADP + protein N-phospho-L-histidine.. Functionally, member of the two-component regulatory system TdiR/TdiS, which probably regulates transcription of toluene catabolic genes (bss operon). May activate TdiR by phosphorylation. This is Sensor protein TdiS (tdiS) from Thauera aromatica.